The chain runs to 662 residues: MSQRNSPFKRRQSISNKSATGDVETTTTTPTPTTTTTTTSSLSSSTSSTIQRQPMKIESKISFNFKKRKDPNDNETDNIKLDNEKTFSNKNENNSLPINQLIQLSIDHNNNNNNNNNNNNNNNNNNNNNNNNNNNNNNNNNNNNNNNNNNNNNNNNNNNNNDTQKGTNKNENNCTDSNKKDLSTSTTSSSETGSSTKIKNEAKTPQSCLKKSNNNNNDNNNNNNRKTPRSTKKVKYHENITNDPNFKEENIEKQIKNDTKEIKENIDNKENNLESQIVNINQSTTPIETTSVTSTTSTATTTTTTPIPNEIPPPQQTQPTREKITPSAESKERMILLRNILIEKLKDTPQHLKKHVREINKLFLLQVLKIPIPKEDEQKSIIKKEQQEQQKKLQQQQQQISLANAQSSFLNKPTNNTETPTTTTTTTTTTTTTPSQPIQMPIESIGNLKNLEVLMRIHTLKMLIEKWSEEEKKWKTLLKEYSSNGKESIILQTPSRTKIAATNSIQNSIKKQQKPTKSSSSTSIQQNNQEENDKNINNNNNNNNNNNNSNNVNNNNNNNNNNNNNNNNNNNNNNNQMVSPIISDDPKMIQITNSISKLSIQLDEVKPRLKQVEQNSIDIEKFYDETSVYYQKQSLKNLKDVDNPKKLIKNLLSNNTISLSNK.

Disordered regions lie at residues 1 to 94, 107 to 237, 288 to 328, 406 to 440, and 506 to 580; these read MSQR…NENN, DHNN…VKYH, ETTS…TPSA, QSSF…PIQM, and QNSI…MVSP. Residues 25 to 49 show a composition bias toward low complexity; it reads TTTTTPTPTTTTTTTSSLSSSTSST. Residues 77–87 show a composition bias toward basic and acidic residues; that stretch reads DNIKLDNEKTF. Positions 109–161 are enriched in low complexity; sequence NNNNNNNNNNNNNNNNNNNNNNNNNNNNNNNNNNNNNNNNNNNNNNNNNNNNN. The segment covering 162–176 has biased composition (polar residues); it reads DTQKGTNKNENNCTD. The segment covering 183 to 196 has biased composition (low complexity); it reads STSTTSSSETGSST. The segment covering 203–212 has biased composition (polar residues); sequence KTPQSCLKKS. Positions 213-224 are enriched in low complexity; it reads NNNNNDNNNNNN. The span at 226-235 shows a compositional bias: basic residues; sequence KTPRSTKKVK. Composition is skewed to low complexity over residues 288–308, 413–434, 515–526, and 535–575; these read ETTS…TPIP, PTNN…TTTP, PTKSSSSTSIQQ, and NINN…NNNN.

This is an uncharacterized protein from Dictyostelium discoideum (Social amoeba).